A 195-amino-acid chain; its full sequence is Proteasome subunit beta 1 (195 aa).

Residues 1-6 constitute a propeptide, removed in mature form; by autocatalysis; it reads MEELPA. The Nucleophile role is filled by Thr-7.

It belongs to the peptidase T1B family. As to quaternary structure, the 20S proteasome core is composed of 14 alpha and 14 beta subunits that assemble into four stacked heptameric rings, resulting in a barrel-shaped structure. The two inner rings, each composed of seven catalytic beta subunits, are sandwiched by two outer rings, each composed of seven alpha subunits. The catalytic chamber with the active sites is on the inside of the barrel. Has a gated structure, the ends of the cylinder being occluded by the N-termini of the alpha-subunits. Is capped at one or both ends by the proteasome regulatory ATPase, PAN.

The protein localises to the cytoplasm. It catalyses the reaction Cleavage of peptide bonds with very broad specificity.. Its activity is regulated as follows. The formation of the proteasomal ATPase PAN-20S proteasome complex, via the docking of the C-termini of PAN into the intersubunit pockets in the alpha-rings, triggers opening of the gate for substrate entry. Interconversion between the open-gate and close-gate conformations leads to a dynamic regulation of the 20S proteasome proteolysis activity. In terms of biological role, component of the proteasome core, a large protease complex with broad specificity involved in protein degradation. This is Proteasome subunit beta 1 from Sulfolobus acidocaldarius (strain ATCC 33909 / DSM 639 / JCM 8929 / NBRC 15157 / NCIMB 11770).